The chain runs to 138 residues: Large ribosomal subunit protein bL19 (138 aa).

This sequence belongs to the bacterial ribosomal protein bL19 family.

Functionally, this protein is located at the 30S-50S ribosomal subunit interface and may play a role in the structure and function of the aminoacyl-tRNA binding site. The chain is Large ribosomal subunit protein bL19 from Rickettsia felis (strain ATCC VR-1525 / URRWXCal2) (Rickettsia azadi).